The primary structure comprises 606 residues: Anthranilate synthase alpha subunit 2, chloroplastic (606 aa).

The N-terminal 49 residues, 1-49, are a transit peptide targeting the chloroplast; the sequence is MESIAAATFTPSRLAARPATPAAAAAPVRARAAVAAGGRRRTSRRGGVR.

It belongs to the anthranilate synthase component I family. Heterotetramer consisting of two non-identical subunits: a beta subunit and a large alpha subunit.

It localises to the plastid. It is found in the chloroplast. The catalysed reaction is chorismate + L-glutamine = anthranilate + pyruvate + L-glutamate + H(+). Its pathway is amino-acid biosynthesis; L-tryptophan biosynthesis; L-tryptophan from chorismate: step 1/5. Feedback inhibition by tryptophan. In terms of biological role, part of a heterotetrameric complex that catalyzes the two-step biosynthesis of anthranilate, an intermediate in the biosynthesis of L-tryptophan. In the first step, the glutamine-binding beta subunit of anthranilate synthase (AS) provides the glutamine amidotransferase activity which generates ammonia as a substrate that, along with chorismate, is used in the second step, catalyzed by the large alpha subunit of AS to produce anthranilate. This Oryza sativa subsp. japonica (Rice) protein is Anthranilate synthase alpha subunit 2, chloroplastic.